The primary structure comprises 249 residues: MADS-box transcription factor 17 (249 aa).

Residues 1-61 enclose the MADS-box domain; sequence MGRGRVELKR…GKLYEFGSAG (61 aa). In terms of domain architecture, K-box spans 88-178; that stretch reads HQSWYQEMSR…KNKLEAEADS (91 aa). The disordered stretch occupies residues 228–249; that stretch reads ANPRSNGGGGDQNNNFVMGWPL.

As to quaternary structure, may interact with the K-box of MADS6. As to expression, expressed in the floral meristem, lodicule, palea, lemma, receptacle, empty glume, stamen, pistil, and ovule.

It localises to the nucleus. Functionally, probable transcription factor. Plays minor but redundant roles with MADS6 in floral development. The polypeptide is MADS-box transcription factor 17 (MADS17) (Oryza sativa subsp. japonica (Rice)).